Reading from the N-terminus, the 174-residue chain is Disulfide bond formation protein B (174 aa).

At methionine 1–phenylalanine 14 the chain is on the cytoplasmic side. Residues tryptophan 15–leucine 31 form a helical membrane-spanning segment. Over asparagine 32–cysteine 49 the chain is Periplasmic. Cysteine 41 and cysteine 44 are oxidised to a cystine. Residues serine 50–proline 65 traverse the membrane as a helical segment. Topologically, residues lysine 66–leucine 72 are cytoplasmic. A helical membrane pass occupies residues phenylalanine 73–asparagine 90. The Periplasmic portion of the chain corresponds to isoleucine 91 to glutamine 146. Residues cysteine 105 and cysteine 132 are joined by a disulfide bond. A helical transmembrane segment spans residues tryptophan 147–serine 165. At glutamine 166–lysine 174 the chain is on the cytoplasmic side.

Belongs to the DsbB family.

The protein localises to the cell inner membrane. Required for disulfide bond formation in some periplasmic proteins. Acts by oxidizing the DsbA protein. This chain is Disulfide bond formation protein B, found in Blochmanniella floridana.